The primary structure comprises 20 residues: Alanine aminotransferase 1 (20 aa).

Residue Lys-11 is modified to N6-(pyridoxal phosphate)lysine. Residue Lys-11 is glycosylated (N-linked (Glc) (glycation) lysine; in vitro).

Belongs to the class-I pyridoxal-phosphate-dependent aminotransferase family. Alanine aminotransferase subfamily. As to quaternary structure, homodimer. Pyridoxal 5'-phosphate serves as cofactor. In terms of processing, glycation of Lys-11 inactivates the enzyme.

Its subcellular location is the cytoplasm. It catalyses the reaction L-alanine + 2-oxoglutarate = pyruvate + L-glutamate. The protein operates within amino-acid degradation; L-alanine degradation via transaminase pathway; pyruvate from L-alanine: step 1/1. In terms of biological role, catalyzes the reversible transamination between alanine and 2-oxoglutarate to form pyruvate and glutamate. Participates in cellular nitrogen metabolism and also in liver gluconeogenesis starting with precursors transported from skeletal muscles. The polypeptide is Alanine aminotransferase 1 (GPT) (Sus scrofa (Pig)).